The chain runs to 97 residues: Small ribosomal subunit protein bS20 (97 aa).

This sequence belongs to the bacterial ribosomal protein bS20 family.

Functionally, binds directly to 16S ribosomal RNA. The chain is Small ribosomal subunit protein bS20 from Methylibium petroleiphilum (strain ATCC BAA-1232 / LMG 22953 / PM1).